A 59-amino-acid polypeptide reads, in one-letter code: uncharacterized protein (59 aa).

A disordered region spans residues 27–59 (SCFQNRPPEPASFQNLRPEPASLQNLRTEPTSF). Over residues 48 to 59 (SLQNLRTEPTSF) the composition is skewed to polar residues.

This is an uncharacterized protein from Homo sapiens (Human).